The chain runs to 299 residues: Lipoyl synthase (299 aa).

Residues Cys-34, Cys-39, Cys-45, Cys-60, Cys-64, Cys-67, and Ser-273 each contribute to the [4Fe-4S] cluster site. Residues 46–262 form the Radical SAM core domain; it reads WNKKHATVMI…KYVAYSKGFL (217 aa).

This sequence belongs to the radical SAM superfamily. Lipoyl synthase family. It depends on [4Fe-4S] cluster as a cofactor.

It localises to the cytoplasm. It carries out the reaction [[Fe-S] cluster scaffold protein carrying a second [4Fe-4S](2+) cluster] + N(6)-octanoyl-L-lysyl-[protein] + 2 oxidized [2Fe-2S]-[ferredoxin] + 2 S-adenosyl-L-methionine + 4 H(+) = [[Fe-S] cluster scaffold protein] + N(6)-[(R)-dihydrolipoyl]-L-lysyl-[protein] + 4 Fe(3+) + 2 hydrogen sulfide + 2 5'-deoxyadenosine + 2 L-methionine + 2 reduced [2Fe-2S]-[ferredoxin]. Its pathway is protein modification; protein lipoylation via endogenous pathway; protein N(6)-(lipoyl)lysine from octanoyl-[acyl-carrier-protein]: step 2/2. Its function is as follows. Catalyzes the radical-mediated insertion of two sulfur atoms into the C-6 and C-8 positions of the octanoyl moiety bound to the lipoyl domains of lipoate-dependent enzymes, thereby converting the octanoylated domains into lipoylated derivatives. In Ehrlichia canis (strain Jake), this protein is Lipoyl synthase.